A 548-amino-acid polypeptide reads, in one-letter code: Membrane protein insertase YidC (548 aa).

The helical transmembrane segment at 6–26 (NLLVIALLFVSFMIWQAWEQD) threads the bilayer. The disordered stretch occupies residues 28 to 54 (NPQPQTQQTTQTTTTAAGSAADQGVPA). Residues 29-42 (PQPQTQQTTQTTTT) show a composition bias toward low complexity. 4 helical membrane passes run 350–370 (FLGN…GIMY), 424–444 (FPLI…MGSI), 458–478 (LSAQ…MFFI), and 499–519 (PVIF…YYIV).

The protein belongs to the OXA1/ALB3/YidC family. Type 1 subfamily. In terms of assembly, interacts with the Sec translocase complex via SecD. Specifically interacts with transmembrane segments of nascent integral membrane proteins during membrane integration.

Its subcellular location is the cell inner membrane. Required for the insertion and/or proper folding and/or complex formation of integral membrane proteins into the membrane. Involved in integration of membrane proteins that insert both dependently and independently of the Sec translocase complex, as well as at least some lipoproteins. Aids folding of multispanning membrane proteins. This is Membrane protein insertase YidC from Citrobacter koseri (strain ATCC BAA-895 / CDC 4225-83 / SGSC4696).